Consider the following 605-residue polypeptide: Glycerophosphodiester phosphodiesterase domain-containing protein 5 (605 aa).

The Cytoplasmic portion of the chain corresponds to 1 to 42 (MVRHQPLQYYEPQLCLSCLTGIYGCRWKRYQRSHDDTTPWER). Disulfide bonds link Cys-15/Cys-18 and Cys-25/Cys-571. The chain crosses the membrane as a helical span at residues 43–63 (LWFLLLTFTFGLTLTWLYFWW). The Extracellular segment spans residues 64 to 89 (EVHNDYDEFNWYLYNRMGYWSDWPVP). The helical transmembrane segment at 90 to 110 (ILVTTAAAFAYIAGLLVLALC) threads the bilayer. The Cytoplasmic segment spans residues 111-125 (HIAVGQQMNLHWLHK). Residues 126 to 146 (IGLVVILASTVVAMSAVAQLW) form a helical membrane-spanning segment. The Extracellular segment spans residues 147 to 160 (EDEWEVLLISLQGT). Residues 161 to 181 (APFLHVGAVAAVTMLSWIVAG) traverse the membrane as a helical segment. The Cytoplasmic segment spans residues 182–192 (QFARAERTSSQ). A helical transmembrane segment spans residues 193-213 (VTILCTFFTVVFALYLAPLTI). Over 214 to 496 (SSPCIMEKKD…PLWIMPPDEY (283 aa)) the chain is Extracellular. A GP-PDE domain is found at 228–485 (PALIGHRGAP…DNSHALSQVP (258 aa)). N-linked (GlcNAc...) asparagine glycosylation is found at Asn-301, Asn-336, Asn-352, Asn-374, and Asn-448. Residues 497-517 (CLMWVTADLVSFTLIVGIFVL) traverse the membrane as a helical segment. The Cytoplasmic segment spans residues 518-605 (QKWRLGGIRS…TKTLIERSGR (88 aa)). A disordered region spans residues 582 to 605 (STATPVGPRGGGSHTKTLIERSGR).

Belongs to the glycerophosphoryl diester phosphodiesterase family. In terms of assembly, interacts with PRDX1; forms a mixed-disulfide with PRDX1, leading to disrupt intramolecular disulfide bond between Cys-25 and Cys-571. Intramolecular disulfide bond between Cys-25 and Cys-571 is reduced by PRDX1.

The protein localises to the endomembrane system. It localises to the cytoplasm. It is found in the perinuclear region. Its subcellular location is the cell projection. The protein resides in the growth cone. The catalysed reaction is a 1,2-diacyl-sn-glycero-3-phospho-(1D-myo-inositol-4,5-bisphosphate) + H2O = 1D-myo-inositol 1,4,5-trisphosphate + a 1,2-diacyl-sn-glycerol + H(+). It carries out the reaction sn-glycerol 3-phosphocholine + H2O = sn-glycerol 3-phosphate + choline + H(+). Functionally, glycerophosphodiester phosphodiesterase that promotes neurite formation and drives spinal motor neuron differentiation. Mediates the cleavage of glycosylphosphatidylinositol (GPI) anchor of target proteins: removes the GPI-anchor of RECK, leading to release RECK from the plasma membrane. May contribute to the osmotic regulation of cellular glycerophosphocholine. In Homo sapiens (Human), this protein is Glycerophosphodiester phosphodiesterase domain-containing protein 5.